A 204-amino-acid chain; its full sequence is Cytochrome P450 monooxygenase PC-23 (204 aa).

Cysteine 138 lines the heme pocket.

It belongs to the cytochrome P450 family. Heme serves as cofactor.

Its pathway is secondary metabolite biosynthesis. Its function is as follows. Cytochrome P450 monooxygenase; part of the gene cluster that mediates the biosynthesis of the indole diterpenes penitrems. The geranylgeranyl diphosphate (GGPP) synthase penG catalyzes the first step in penitrem biosynthesis via conversion of farnesyl pyrophosphate and isopentyl pyrophosphate into geranylgeranyl pyrophosphate (GGPP). Condensation of indole-3-glycerol phosphate with GGPP by the prenyl transferase penC then forms 3-geranylgeranylindole (3-GGI). Epoxidation by the FAD-dependent monooxygenase penM leads to a epoxidized-GGI that is substrate of the terpene cyclase penB for cyclization to yield paspaline. Paspaline is subsequently converted to 13-desoxypaxilline by the cytochrome P450 monooxygenase penP, the latter being then converted to paxilline by the cytochrome P450 monooxygenase penQ. Paxilline is converted to beta-paxitriol via C-10 ketoreduction by the short-chain dehydrogenase PC-15 which can be monoprenylated at the C-20 by the indole diterpene prenyltransferase penD. A two-step elimination (acetylation and elimination) process performed by the O-acetyltransferase PC-16 and the P.simplicissimum ptmI-ortholog not yet identified in P.crustosum, leads to the production of the prenylated form of penijanthine. The FAD-linked oxidoreductase ptmO then converts the prenylated form of penijanthine into PC-M5 which is in turn transformed into PC-M4 by the aromatic dimethylallyltransferase PC-22. A series of oxidation steps involving 4 cytochrome P450 monooxygenases (PC-21, PC-05, PC-23, PC-20) and a FAD-dependent monooxygenase (PC-14) are required for the transformation of PC-M4 to penitrems A and E. Synthesis of these final products is proposed to proceed via penitrems D and C (PC-21, PC-05, PC-14) and penitrems B and F (PC-21, PC-05, PC-14, PC-23). This is Cytochrome P450 monooxygenase PC-23 from Penicillium crustosum (Blue mold fungus).